Reading from the N-terminus, the 88-residue chain is Kunitz-type U15-theraphotoxin-Hhn1e (88 aa).

The first 27 residues, 1–27 (MGTARFLRAVLLLSVLLMVTFPALLSA), serve as a signal peptide directing secretion. Residues 28-33 (EHHDGR) constitute a propeptide that is removed on maturation. Positions 37–85 (CRLPSDSGDCLRFFEMWYFDGTTCTKFVYGGYGGNDNRFPTKKACMKRC) constitute a BPTI/Kunitz inhibitor domain. Cystine bridges form between Cys-37–Cys-85 and Cys-60–Cys-81.

The protein belongs to the venom Kunitz-type family. 03 (sub-Kunitz) subfamily. Expressed by the venom gland.

The protein resides in the secreted. Serine protease inhibitor that inhibits trypsin at a molar ratio of 1:1. The sequence is that of Kunitz-type U15-theraphotoxin-Hhn1e from Cyriopagopus hainanus (Chinese bird spider).